We begin with the raw amino-acid sequence, 532 residues long: Methionine--tRNA ligase (532 aa).

The 'HIGH' region motif lies at 16–26 (YYVNDVPHLGS). Zn(2+) is bound by residues Cys131, Cys134, Cys149, and His152. The 'KMSKS' region motif lies at 305–309 (KMGKS). Lys308 contributes to the ATP binding site.

It belongs to the class-I aminoacyl-tRNA synthetase family. MetG type 2A subfamily. Monomer. Requires Zn(2+) as cofactor.

The protein resides in the cytoplasm. It carries out the reaction tRNA(Met) + L-methionine + ATP = L-methionyl-tRNA(Met) + AMP + diphosphate. In terms of biological role, is required not only for elongation of protein synthesis but also for the initiation of all mRNA translation through initiator tRNA(fMet) aminoacylation. This is Methionine--tRNA ligase (metG) from Synechocystis sp. (strain ATCC 27184 / PCC 6803 / Kazusa).